A 1809-amino-acid chain; its full sequence is MSLGELLETCRSRRIELWSEAGRLRYRAPQGALDAGLAERLRAEREALLEHLEGGPGWRAEPDMAHQRFPLTPVQAAYVLGRQAAFDYGGNACQLYAEYDWPADTDPARLEAAWNAMVERHPMLRAVIEDNAWQRVLPEVPWQRLTVHACAGLDEAAFQAHLERVRERLDHACAALDQWPVLRPELSIGRDACVLHCSVDFTLVDYASLQLLLGEWRRRYLDPQWTAEPLEATFRDYVGVEQRRRQSPAWQRDRDWWLARLDALPGRPDLPLRVQPDTRSTRFRHFHARLDEAAWQALGARAGEHGLSAAGVALAAFAETIGRWSQAPAFCLNLTVLNRPPLHPQLAQVLGDFTALSLLAVDSRHGDSFVERARRIGEQMFDDLDHPTFSGVDLLRELARRRGRGADLMPVVFTSGIGSVQRLLGDGEAPRAPRYMISQTPQVWLDCQVTDQFGGLEIGWDVRLGLFPEGQAEAMFDDFVGLLRRLAQSPRAWTDGDATEPVEAPPQALPGSARSIAAGFAERALLTPDATAIHDAAGSYSYRQVAQHASALRRVLEAHGAGRGRRVAVMLPKSAAQLVAVIGILQAGAAYVPVDIRQPPLRRQAILASAEVVALVCLESDVPDVGCACVAIDRLAADSAWPPPPAAEVAADDLAYVIYTSGSTGTPKGVMLSHAAVSNTLLDINQRYGVDANDRVLGLAELSFDLSVYDFFGATAAGAQVVLPDPARGSDPSHWAELLERHAITLWNSVPAQGQMLIDYLESEPQRHLPGPRCVLWSGDWIPVSLPTRWWRRWPDSALFSLGGATEAAIWSIEQPIRPQHTELASIPYGRALRGQSVEVLDARGRRCPPGVRGEIHIGGVGLALGYAGDPQRTAERFVRHPDGRRLYRTGDLGRYLADGSIEFLGREDDQVKIRGHRIELAELDAALCAHPQVNLAATVVLGETHERSLASFVTLHAPVEAGEDPRTALDAVRQRAAQALRRDWGSEEGIAAAVAALDRACLASLAAWLAGSGLFASATPLDLATLCQRLGIAEARQRLLRHWLRQLEEGGYLRAEGEGWLGCAERPAQSPEDAWTAFAGCAPAALWPAELVAYLRDSAQSLGEQLAGRISPAALMFPQGSARIAEAMYSQGLHAQALHEAMAEAIAAIVERQPQRRWRLLELGAGTAAASRTVIARLAPLVQRGAEVDYLFTDVSSYFLAAARERFADQPWVRFGRFDMNGDLLDQGVAPHSVDILLSSGALNNALDTPALLAGLRELLSADAWLVIQELTREHNEISVSQSLMMENPRDLRDERRQLFVHTGQWLEWLAAQGGDLACGVVPPGSALDLLGYDVLLARCKTDRARLEPAELLAFVEARVPRYMLPAQLRVLERLPVTGNGKIDRKALTGFARQPQADLRHGVAQAPADELENALLALWREVLDNPSLGVEQDFFGAGGDSLLIAQLIARLRERLESARRHPFDRLLRWALSQPTPRGLAERLRSAPEEGRGPALAAARGVAPAPAGMSRAPLAEGAVALDPLVRLVPGEGVPRVLVHEGLGTLLPYRPLLRALGEGRPLLGLAVHDSDAYLAIPAEHLNACLGRRYAEALHRAGLREVDLLGYCSGGLVALETAKSLVQRGVRVRQLDIVSSYRIPYRVDDERLLLFSFAATLGLDTAALGFPAPERLGQAVQAALAQTPERLVAEALAGLPGLADLVALRGRVLQAASGSADAVSVERDTLYRLFCHSVRASQAEAPEPYVGALRLFVPDAGNPLVPRYAEALETQWRAAALGACGIHEVPGGHFDCLGEALAQSLSKPMPEEASR.

Positions 69-490 are condensation/cyclization; it reads FPLTPVQAAY…GLLRRLAQSP (422 aa). Residues 520–915 are adenylation; the sequence is FAERALLTPD…GREDDQVKIR (396 aa). In terms of domain architecture, Carrier spans 1407–1488; sequence APADELENAL…GLAERLRSAP (82 aa). Ser1442 carries the O-(pantetheine 4'-phosphoryl)serine modification. The segment at 1584-1797 is thioesterase; that stretch reads LGRRYAEALH…FDCLGEALAQ (214 aa).

This sequence belongs to the NRP synthetase family. The cofactor is pantetheine 4'-phosphate.

It catalyses the reaction holo-[peptidyl-carrier protein] + L-cysteine + ATP = L-cysteinyl-[peptidyl-carrier protein] + AMP + diphosphate. It participates in siderophore biosynthesis. In terms of biological role, involved in the biosynthesis of the siderophore pyochelin. Adenylates L-cysteine and loads it onto its peptidyl carrier domain via a thioester linkage to the phosphopanthetheine moiety. Then forms a peptide bond between the salicyl-thiazolinyl intermediate bound to the second carrier domain of PchE and the cysteine bound to its own peptidyl carrier domain to form the salicyl-thiazolinyl-cysteinyl-S-PCP2 intermediate. It subsequently cyclizes the C-terminal cysteine to form the second thiazoline heterocycle in the salicyl-thiazolinyl-thiazolinyl-S-PCP2 intermediate. When this intermediate is released by the action of a thioesterase, it produces the tricyclic acid hydroxyphenyl-thiazolyl-thiazolinyl-carboxylic acid (HPTT-COOH), an advanced intermediate containing the aryl-4,2-bis-heterocyclic skeleton of the bithiazoline class of siderophores. This chain is Pyochelin synthetase PchF, found in Pseudomonas aeruginosa (strain ATCC 15692 / DSM 22644 / CIP 104116 / JCM 14847 / LMG 12228 / 1C / PRS 101 / PAO1).